The chain runs to 367 residues: UDP-N-acetylglucosamine--N-acetylmuramyl-(pentapeptide) pyrophosphoryl-undecaprenol N-acetylglucosamine transferase (367 aa).

Residues 15–17, Asn-127, Arg-163, Ser-191, Ile-249, and Gln-294 each bind UDP-N-acetyl-alpha-D-glucosamine; that span reads TGG.

This sequence belongs to the glycosyltransferase 28 family. MurG subfamily.

It localises to the cell inner membrane. It catalyses the reaction di-trans,octa-cis-undecaprenyl diphospho-N-acetyl-alpha-D-muramoyl-L-alanyl-D-glutamyl-meso-2,6-diaminopimeloyl-D-alanyl-D-alanine + UDP-N-acetyl-alpha-D-glucosamine = di-trans,octa-cis-undecaprenyl diphospho-[N-acetyl-alpha-D-glucosaminyl-(1-&gt;4)]-N-acetyl-alpha-D-muramoyl-L-alanyl-D-glutamyl-meso-2,6-diaminopimeloyl-D-alanyl-D-alanine + UDP + H(+). It participates in cell wall biogenesis; peptidoglycan biosynthesis. Functionally, cell wall formation. Catalyzes the transfer of a GlcNAc subunit on undecaprenyl-pyrophosphoryl-MurNAc-pentapeptide (lipid intermediate I) to form undecaprenyl-pyrophosphoryl-MurNAc-(pentapeptide)GlcNAc (lipid intermediate II). The chain is UDP-N-acetylglucosamine--N-acetylmuramyl-(pentapeptide) pyrophosphoryl-undecaprenol N-acetylglucosamine transferase from Burkholderia cenocepacia (strain ATCC BAA-245 / DSM 16553 / LMG 16656 / NCTC 13227 / J2315 / CF5610) (Burkholderia cepacia (strain J2315)).